The following is a 720-amino-acid chain: Engulfment and cell motility protein 3 (720 aa).

In terms of domain architecture, ELMO spans 307–479; it reads EQRDQLQALR…VVREQLARTL (173 aa). Positions 542-664 constitute a PH domain; the sequence is RLCEGMLFRK…TDGLSALLGS (123 aa). The SH3-binding signature appears at 696–706; it reads PEQPPPVPPPP.

Probably interacts directly with the SH3-domain of DOCK1 via its SH3-binding site. Part of a complex with DOCK1 and RAC1. Interacts with ADGRB3.

The protein localises to the cytoplasm. In terms of biological role, involved in cytoskeletal rearrangements required for phagocytosis of apoptotic cells and cell motility. Acts in association with DOCK1 and CRK. Was initially proposed to be required in complex with DOCK1 to activate Rac Rho small GTPases. May enhance the guanine nucleotide exchange factor (GEF) activity of DOCK1. The chain is Engulfment and cell motility protein 3 (Elmo3) from Mus musculus (Mouse).